A 210-amino-acid chain; its full sequence is ATP-dependent Clp protease proteolytic subunit (210 aa).

The Nucleophile role is filled by serine 106. The active site involves histidine 131.

It belongs to the peptidase S14 family. As to quaternary structure, fourteen ClpP subunits assemble into 2 heptameric rings which stack back to back to give a disk-like structure with a central cavity, resembling the structure of eukaryotic proteasomes.

The protein resides in the cytoplasm. The catalysed reaction is Hydrolysis of proteins to small peptides in the presence of ATP and magnesium. alpha-casein is the usual test substrate. In the absence of ATP, only oligopeptides shorter than five residues are hydrolyzed (such as succinyl-Leu-Tyr-|-NHMec, and Leu-Tyr-Leu-|-Tyr-Trp, in which cleavage of the -Tyr-|-Leu- and -Tyr-|-Trp bonds also occurs).. In terms of biological role, cleaves peptides in various proteins in a process that requires ATP hydrolysis. Has a chymotrypsin-like activity. Plays a major role in the degradation of misfolded proteins. In Bartonella tribocorum (strain CIP 105476 / IBS 506), this protein is ATP-dependent Clp protease proteolytic subunit.